The sequence spans 406 residues: DNA repair protein RAD55 (406 aa).

Residue 43-50 (GPPGIGKT) participates in ATP binding. Residues 385 to 406 (DSNDNPLPNAEGKEEIIYDSEG) are disordered.

It belongs to the RecA family. RAD55 subfamily.

It localises to the nucleus. In terms of biological role, required for radiation resistance and meiotic viability and presumably acts in recombination and recombinational DNA repair pathways. This Saccharomyces cerevisiae (strain ATCC 204508 / S288c) (Baker's yeast) protein is DNA repair protein RAD55 (RAD55).